Here is a 101-residue protein sequence, read N- to C-terminus: Small ribosomal subunit protein uS14 (101 aa).

This sequence belongs to the universal ribosomal protein uS14 family. In terms of assembly, part of the 30S ribosomal subunit. Contacts proteins S3 and S10.

Functionally, binds 16S rRNA, required for the assembly of 30S particles and may also be responsible for determining the conformation of the 16S rRNA at the A site. In Salmonella schwarzengrund (strain CVM19633), this protein is Small ribosomal subunit protein uS14.